The primary structure comprises 73 residues: Beta-1 adrenergic receptor (73 aa).

A helical membrane pass occupies residues 1–12; that stretch reads ISALVSFLPILM. Over 13 to 38 the chain is Extracellular; it reads HWWRAENDEARRCYNDPKCCDFVTNR. An intrachain disulfide couples Cys-25 to Cys-31. Residues 39 to 64 form a helical membrane-spanning segment; the sequence is AYAIASSVVSFYVPLCIMAFVYLRVF. Residue Ser-44 coordinates cyanopindolol. At 65–73 the chain is on the cytoplasmic side; that stretch reads REAQKQVKK.

It belongs to the G-protein coupled receptor 1 family. Adrenergic receptor subfamily. ADRB1 sub-subfamily. Interacts (via C-terminus PDZ motif) with RAPGEF2; the interaction is direct. Interacts with GOPC, MAGI3 and DLG4. Homologous desensitization of the receptor is mediated by its phosphorylation by beta-adrenergic receptor kinase.

The protein localises to the cell membrane. It localises to the early endosome. Its function is as follows. Beta-adrenergic receptors mediate the catecholamine-induced activation of adenylate cyclase through the action of G proteins. This receptor binds epinephrine and norepinephrine with approximately equal affinity. Mediates Ras activation through G(s)-alpha- and cAMP-mediated signaling. In dorsal pons neurons, involved in the regulation of sleep/wake behaviors. In Meriones unguiculatus (Mongolian jird), this protein is Beta-1 adrenergic receptor (ADRB1).